A 253-amino-acid polypeptide reads, in one-letter code: Aspartate/glutamate leucyltransferase (253 aa).

The protein belongs to the R-transferase family. Bpt subfamily.

It localises to the cytoplasm. It catalyses the reaction N-terminal L-glutamyl-[protein] + L-leucyl-tRNA(Leu) = N-terminal L-leucyl-L-glutamyl-[protein] + tRNA(Leu) + H(+). It carries out the reaction N-terminal L-aspartyl-[protein] + L-leucyl-tRNA(Leu) = N-terminal L-leucyl-L-aspartyl-[protein] + tRNA(Leu) + H(+). In terms of biological role, functions in the N-end rule pathway of protein degradation where it conjugates Leu from its aminoacyl-tRNA to the N-termini of proteins containing an N-terminal aspartate or glutamate. This Allorhizobium ampelinum (strain ATCC BAA-846 / DSM 112012 / S4) (Agrobacterium vitis (strain S4)) protein is Aspartate/glutamate leucyltransferase.